A 60-amino-acid polypeptide reads, in one-letter code: Potassium channel toxin alpha-KTx 15.8 (60 aa).

A signal peptide spans Met-1–Cys-22. A Pyrrolidone carboxylic acid modification is found at Gln-23. 3 disulfides stabilise this stretch: Cys-30-Cys-50, Cys-35-Cys-55, and Cys-39-Cys-57.

Belongs to the short scorpion toxin superfamily. Potassium channel inhibitor family. Alpha-KTx 15 subfamily. As to expression, expressed by the venom gland.

It is found in the secreted. Its function is as follows. Blocker of A-type voltage-gated potassium channels of cerebellar granular cells. May also inhibit Kv4/KCND when coexpressed with DPP6 or DPP10. The occlusion of the outer entry of the K(+) conducting pore is partially reversible and affects both open and closed channels. It shares the same target in rat brain than BmTX3 (AC Q8I0L5) and AmmTX3 (AC P60208). Also shows a weak inhibition on Kv1.2/KCNA2 and Kv1.3/KCNA3 voltage-gated potassium channels. The polypeptide is Potassium channel toxin alpha-KTx 15.8 (Olivierus martensii (Manchurian scorpion)).